The following is a 212-amino-acid chain: Phosphoribosylformylglycinamidine synthase subunit PurQ (212 aa).

The 211-residue stretch at 2-212 (RIAVLKFPGT…WLGLISWLRR (211 aa)) folds into the Glutamine amidotransferase type-1 domain. The Nucleophile role is filled by Cys85. Catalysis depends on residues His183, Glu185, and His191.

As to quaternary structure, part of the FGAM synthase complex composed of 1 PurL, 1 PurQ and 2 PurS subunits.

The protein resides in the cytoplasm. The catalysed reaction is N(2)-formyl-N(1)-(5-phospho-beta-D-ribosyl)glycinamide + L-glutamine + ATP + H2O = 2-formamido-N(1)-(5-O-phospho-beta-D-ribosyl)acetamidine + L-glutamate + ADP + phosphate + H(+). The enzyme catalyses L-glutamine + H2O = L-glutamate + NH4(+). Its pathway is purine metabolism; IMP biosynthesis via de novo pathway; 5-amino-1-(5-phospho-D-ribosyl)imidazole from N(2)-formyl-N(1)-(5-phospho-D-ribosyl)glycinamide: step 1/2. Part of the phosphoribosylformylglycinamidine synthase complex involved in the purines biosynthetic pathway. Catalyzes the ATP-dependent conversion of formylglycinamide ribonucleotide (FGAR) and glutamine to yield formylglycinamidine ribonucleotide (FGAM) and glutamate. The FGAM synthase complex is composed of three subunits. PurQ produces an ammonia molecule by converting glutamine to glutamate. PurL transfers the ammonia molecule to FGAR to form FGAM in an ATP-dependent manner. PurS interacts with PurQ and PurL and is thought to assist in the transfer of the ammonia molecule from PurQ to PurL. This is Phosphoribosylformylglycinamidine synthase subunit PurQ from Pyrobaculum aerophilum (strain ATCC 51768 / DSM 7523 / JCM 9630 / CIP 104966 / NBRC 100827 / IM2).